A 394-amino-acid chain; its full sequence is Phosphoglycerate kinase (394 aa).

Substrate-binding positions include 21–23, 59–62, Arg-117, and Arg-150; these read DLN and HLGR. ATP contacts are provided by residues Lys-201, Glu-318, and 344 to 347; that span reads GGDT.

Belongs to the phosphoglycerate kinase family. In terms of assembly, monomer.

The protein resides in the cytoplasm. The catalysed reaction is (2R)-3-phosphoglycerate + ATP = (2R)-3-phospho-glyceroyl phosphate + ADP. Its pathway is carbohydrate degradation; glycolysis; pyruvate from D-glyceraldehyde 3-phosphate: step 2/5. The sequence is that of Phosphoglycerate kinase from Blochmanniella pennsylvanica (strain BPEN).